The chain runs to 214 residues: Nascent polypeptide-associated complex subunit alpha (214 aa).

The interval 1–80 is disordered; sequence MPGEATETVP…SEKKARKAMS (80 aa). Residues 29–40 are compositionally biased toward acidic residues; that stretch reads SDSDDSPPELEQ. Residues 41–56 are compositionally biased toward low complexity; that stretch reads DSTQTTTQQAQLAAAA. An NAC-A/B domain is found at 69-134; that stretch reads SRSEKKARKA…AKIEDLSQQA (66 aa). One can recognise a UBA domain in the interval 175 to 212; it reads VEVKDIELVMSQANVSRAKAVRALKNNSNDIVNAIMEL.

This sequence belongs to the NAC-alpha family.

Functionally, may promote appropriate targeting of ribosome-nascent polypeptide complexes. This Xenopus tropicalis (Western clawed frog) protein is Nascent polypeptide-associated complex subunit alpha (naca).